Consider the following 686-residue polypeptide: Phosphomethylpyrimidine synthase (686 aa).

Residues asparagine 235, methionine 264, tyrosine 293, histidine 329, 349–351, 390–393, and glutamate 429 each bind substrate; these read SRG and DGMR. Histidine 433 is a binding site for Zn(2+). A substrate-binding site is contributed by tyrosine 456. Histidine 497 provides a ligand contact to Zn(2+). Residues cysteine 577, cysteine 580, and cysteine 585 each contribute to the [4Fe-4S] cluster site. A disordered region spans residues 659 to 686; that stretch reads IDSSGINDNKNDQQDASVVRVPSLEIEG.

It belongs to the ThiC family. Homodimer. Requires [4Fe-4S] cluster as cofactor.

It carries out the reaction 5-amino-1-(5-phospho-beta-D-ribosyl)imidazole + S-adenosyl-L-methionine = 4-amino-2-methyl-5-(phosphooxymethyl)pyrimidine + CO + 5'-deoxyadenosine + formate + L-methionine + 3 H(+). It participates in cofactor biosynthesis; thiamine diphosphate biosynthesis. In terms of biological role, catalyzes the synthesis of the hydroxymethylpyrimidine phosphate (HMP-P) moiety of thiamine from aminoimidazole ribotide (AIR) in a radical S-adenosyl-L-methionine (SAM)-dependent reaction. In Shewanella denitrificans (strain OS217 / ATCC BAA-1090 / DSM 15013), this protein is Phosphomethylpyrimidine synthase.